Consider the following 588-residue polypeptide: MGTALVYHEDMTATRLLWDDPECEIECPERLTAALDGLRQRGLEERCQCLSVCEASEEELGLVHSPEYIALVQKTQTLDKEELHTLSKQYDAVYFHPDTFHCARLAAGAALRLVDAVLTGAVHNGVALVRPPGHHSQRAAANGFCVFNNVAIAARHAKQKYGLQRILIVDWDVHHGQGIQYIFEDDPSVLYFSWHRYEHGNFWPFLPESDADTVGRGRGQGFTVNLPWNQVGMGNADYLAAFLHVLLPLAFEFDPELVLVSAGFDSAIGDPEGQMQATPECFAHLTQLLQVLAGGRICAVLECPGVYPECSDSPDPSLDKPPTNSTCTVAEDSLSPCLDRPCHRPTPPICIAVALAVSGAALDLPPGVLHQEGSALREETEAWARLHKSQFQDDDLAALGKSLCLLDGILDGQIRSAIATTTALATAATLGVLIQRCVAHRGQRRILWLSIRGKEADIWSMFHFSTPLPQTTGGFLSFILGLVLPLAYGFQPDMVLMALGPAHGLQNAQAALLAAMLRSPVGGRILALVEEESILQLARTLAQVLHGETPPSLGPFSMASPEEIQALMFLKAQLEPRWKLLQVAAPPP.

Positions 1–302 (MGTALVYHED…AGGRICAVLE (302 aa)) are histone deacetylase. The active site involves His135.

Belongs to the histone deacetylase family. HD type 2 subfamily. In terms of assembly, interacts with HDAC3. Interacts with HDAC2 and NCOR2/SMRT. Interacts with HSPA8/HSC70. Interacts with MSH2.

The protein localises to the cytoplasm. The protein resides in the nucleus. The enzyme catalyses N(8)-acetylspermidine + H2O = spermidine + acetate. It catalyses the reaction N-acetylputrescine + H2O = putrescine + acetate. The catalysed reaction is N-acetylcadaverine + H2O = cadaverine + acetate. It carries out the reaction N(6)-acetyl-L-lysyl-[protein] + H2O = L-lysyl-[protein] + acetate. Polyamine deacetylase (PDAC), which acts preferentially on N(8)-acetylspermidine, and also on acetylcadaverine and acetylputrescine. Exhibits attenuated catalytic activity toward N(1),N(8)-diacetylspermidine and very low activity, if any, toward N(1)-acetylspermidine. Histone deacetylase activity has been observed in vitro. Has also been shown to be involved in MSH2 deacetylation. The physiological relevance of protein/histone deacetylase activity is unclear and could be very weak. May play a role in the promotion of late stages of autophagy, possibly autophagosome-lysosome fusion and/or lysosomal exocytosis in neuroblastoma cells. May play a role in homologous recombination. May promote DNA mismatch repair. This chain is Polyamine deacetylase HDAC10 (Hdac10), found in Rattus norvegicus (Rat).